A 462-amino-acid chain; its full sequence is Kinetochore protein nsk1 (462 aa).

Positions 104 to 120 (PSKNHETSLSPSKSTID) are enriched in polar residues. Disordered regions lie at residues 104 to 161 (PSKN…CPGI), 180 to 240 (EKYG…PLRT), and 320 to 462 (NQLF…NIQS). The segment covering 121-138 (NNERKLDNEIDNYKHDVK) has biased composition (basic and acidic residues). A compositionally biased stretch (polar residues) spans 146–156 (GKTSNPSQGTT). Over residues 180 to 189 (EKYGKTDLGK) the composition is skewed to basic and acidic residues. Residues 229-240 (KNRSSTFSPLRT) are compositionally biased toward polar residues. Over residues 324 to 333 (KSEEEKDPVG) the composition is skewed to basic and acidic residues. Over residues 422–444 (WPQNLAKNNINSEPNTPTKSNID) the composition is skewed to polar residues. Over residues 449 to 462 (HSARAHKTRKNIQS) the composition is skewed to basic residues.

As to quaternary structure, interacts with dlc1. The dlc1-nsk1 complex seems to oligomerize in chain-like structures. Also binds directly to spindle microtubules. Phosphorylated by cdk1 at prometaphase arrest. Phosphorylation prevents nsk1 kinetochore and spindle targeting. Dephosphorylated by clp1 at anaphase onset controls its relocalization.

The protein resides in the nucleus. It is found in the nucleolus. It localises to the cytoplasm. The protein localises to the cytoskeleton. Its subcellular location is the spindle. The protein resides in the chromosome. It is found in the centromere. It localises to the kinetochore. Ensures chromosome alignment and accurate chromosome segregation during mitosis. Promotes proper kinetochore-microtubule (k-MT) interactions during anaphase B. The phosphorylation status of nsk1 affects the proper k-MT coupling, ensuring that it interacts stably only at the correct time during mitosis. The chain is Kinetochore protein nsk1 (nsk1) from Schizosaccharomyces pombe (strain 972 / ATCC 24843) (Fission yeast).